A 132-amino-acid polypeptide reads, in one-letter code: MSTDEPKTDAQWRAELSPEQYRILREQGTERAFTGEYWDHHANGEYRCAACGAPLFSSSAKFDSGTGWPSFYEALNAQAVRERTDTTHGMVRTEALCSRCNSHLGHVFPDGPPPTGLRYCINSASLSFHPKD.

In terms of domain architecture, MsrB spans 9 to 131; sequence DAQWRAELSP…NSASLSFHPK (123 aa). 4 residues coordinate Zn(2+): Cys-48, Cys-51, Cys-97, and Cys-100. Cys-120 functions as the Nucleophile in the catalytic mechanism.

It belongs to the MsrB Met sulfoxide reductase family. Zn(2+) is required as a cofactor.

The enzyme catalyses L-methionyl-[protein] + [thioredoxin]-disulfide + H2O = L-methionyl-(R)-S-oxide-[protein] + [thioredoxin]-dithiol. The chain is Peptide methionine sulfoxide reductase MsrB from Thiobacillus denitrificans (strain ATCC 25259 / T1).